We begin with the raw amino-acid sequence, 513 residues long: Cobyric acid synthase (513 aa).

The region spanning 252–457 (KIDIAVIRLP…LHGIFDEEGI (206 aa)) is the GATase cobBQ-type domain. Catalysis depends on C333, which acts as the Nucleophile. Residue H449 is part of the active site.

This sequence belongs to the CobB/CobQ family. CobQ subfamily.

It participates in cofactor biosynthesis; adenosylcobalamin biosynthesis. Catalyzes amidations at positions B, D, E, and G on adenosylcobyrinic A,C-diamide. NH(2) groups are provided by glutamine, and one molecule of ATP is hydrogenolyzed for each amidation. The polypeptide is Cobyric acid synthase (Lachnoclostridium phytofermentans (strain ATCC 700394 / DSM 18823 / ISDg) (Clostridium phytofermentans)).